A 392-amino-acid polypeptide reads, in one-letter code: DNA replication and repair protein RecF (392 aa).

Position 30 to 37 (30 to 37 (GPNAAGKT)) interacts with ATP.

Belongs to the RecF family.

It is found in the cytoplasm. Functionally, the RecF protein is involved in DNA metabolism; it is required for DNA replication and normal SOS inducibility. RecF binds preferentially to single-stranded, linear DNA. It also seems to bind ATP. This is DNA replication and repair protein RecF from Chloroflexus aurantiacus (strain ATCC 29364 / DSM 637 / Y-400-fl).